The primary structure comprises 292 residues: Elongation factor Ts (292 aa).

The segment at 80 to 83 (TDFV) is involved in Mg(2+) ion dislocation from EF-Tu.

The protein belongs to the EF-Ts family.

The protein resides in the cytoplasm. Its function is as follows. Associates with the EF-Tu.GDP complex and induces the exchange of GDP to GTP. It remains bound to the aminoacyl-tRNA.EF-Tu.GTP complex up to the GTP hydrolysis stage on the ribosome. The polypeptide is Elongation factor Ts (Limosilactobacillus fermentum (strain NBRC 3956 / LMG 18251) (Lactobacillus fermentum)).